A 474-amino-acid polypeptide reads, in one-letter code: Glutamate--tRNA ligase (474 aa).

The 'HIGH' region motif lies at 18–28 (PSPTGFLHIGG). The 'KMSKS' region motif lies at 244 to 248 (KLSKR). Lys247 serves as a coordination point for ATP.

It belongs to the class-I aminoacyl-tRNA synthetase family. Glutamate--tRNA ligase type 1 subfamily. As to quaternary structure, monomer.

It localises to the cytoplasm. It catalyses the reaction tRNA(Glu) + L-glutamate + ATP = L-glutamyl-tRNA(Glu) + AMP + diphosphate. Functionally, catalyzes the attachment of glutamate to tRNA(Glu) in a two-step reaction: glutamate is first activated by ATP to form Glu-AMP and then transferred to the acceptor end of tRNA(Glu). In Caulobacter sp. (strain K31), this protein is Glutamate--tRNA ligase.